A 667-amino-acid polypeptide reads, in one-letter code: Transmembrane 9 superfamily member 1 (667 aa).

The first 22 residues, 1 to 22 (MIYKMAHVQLLLLYFFVSTVKA), serve as a signal peptide directing secretion. Topologically, residues 23–302 (FYLPGVAPTT…DKYLHVYDPS (280 aa)) are lumenal. N-linked (GlcNAc...) asparagine glycosylation is found at N61 and N282. A helical membrane pass occupies residues 303 to 323 (IQWFSLINFSLVVVLLSSVVI). The Cytoplasmic portion of the chain corresponds to 324–370 (HSLLRALKSDFARYNELNLDDDFQEDSGWKLNHGDVFRSPSQSLTLS). The helical transmembrane segment at 371–391 (ILVGSGVQLFLMVTCSIFFAA) threads the bilayer. Over 392–405 (LGFLSPSSRGSLAT) the chain is Lumenal. A helical transmembrane segment spans residues 406–426 (VMFILYALFGFVGSYTSMGIY). Over 427–442 (KFFNGPYWKANLILTP) the chain is Cytoplasmic. The helical transmembrane segment at 443-463 (LLVPGAILLIIIALNFFLMFV) threads the bilayer. Over 464–474 (HSSGVIPASTL) the chain is Lumenal. A helical membrane pass occupies residues 475-495 (FFMVFLWFLFSIPLSFAGSLI). The Cytoplasmic segment spans residues 496–527 (ARKRCHWDEHPTKTNQIARQIPFQPWYLKTIP). Residues 528-548 (ATLIAGIFPFGSIAVELYFIY) traverse the membrane as a helical segment. Topologically, residues 549-560 (TSLWFNKIFYMF) are lumenal. A helical transmembrane segment spans residues 561–581 (GFLFFSFLLLTLTSSLVTILI). Topologically, residues 582–596 (TYHSLCLENWKWQWR) are cytoplasmic. Residues 597-617 (GFIIGGAGCALYVFIHSILFT) traverse the membrane as a helical segment. Residues 618-635 (KFKLGGFTTIVLYVGYSS) lie on the Lumenal side of the membrane. A helical transmembrane segment spans residues 636 to 656 (VISLLCCLVTGSIGFISSMLF). Over 657–667 (VRKIYSSIKVD) the chain is Cytoplasmic.

This sequence belongs to the nonaspanin (TM9SF) (TC 9.A.2) family.

The protein localises to the endosome membrane. It localises to the vacuole membrane. Functionally, with TMN2 and TMN3, plays a critical role in the late stages of a nutrient-controlled pathway notably regulating FLO11 gene expression. Acts downstream of RAS2 and TOR. Essential for cell adhesion and filamentous growth. May play a role as effector of cellular copper homeostasis. The polypeptide is Transmembrane 9 superfamily member 1 (EMP70) (Saccharomyces cerevisiae (strain ATCC 204508 / S288c) (Baker's yeast)).